Here is a 72-residue protein sequence, read N- to C-terminus: MSKEEVLEFSGVVIELLPNAMFRVKLENDHEIIAHTAGRMRKNRIRVLAGDKIMVEMTPYDLTKGRITYRYK.

Positions M1 to K72 constitute an S1-like domain.

Belongs to the IF-1 family. In terms of assembly, component of the 30S ribosomal translation pre-initiation complex which assembles on the 30S ribosome in the order IF-2 and IF-3, IF-1 and N-formylmethionyl-tRNA(fMet); mRNA recruitment can occur at any time during PIC assembly.

It localises to the cytoplasm. Functionally, one of the essential components for the initiation of protein synthesis. Stabilizes the binding of IF-2 and IF-3 on the 30S subunit to which N-formylmethionyl-tRNA(fMet) subsequently binds. Helps modulate mRNA selection, yielding the 30S pre-initiation complex (PIC). Upon addition of the 50S ribosomal subunit IF-1, IF-2 and IF-3 are released leaving the mature 70S translation initiation complex. This is Translation initiation factor IF-1 from Bartonella bacilliformis (strain ATCC 35685 / KC583 / Herrer 020/F12,63).